The primary structure comprises 551 residues: FGGY carbohydrate kinase domain-containing protein (551 aa).

It belongs to the FGGY kinase family. Expressed in kidney, lung and small intestine and to a lower extent in liver and detected in cerebrospinal fluid (at protein level).

The catalysed reaction is D-ribulose + ATP = D-ribulose 5-phosphate + ADP + H(+). Its pathway is carbohydrate metabolism; pentose and glucuronate interconversion. Catalyzes ATP-dependent phosphorylation of D-ribulose at C-5 to form D-ribulose 5-phosphate. Postulated to function in a metabolite repair mechanism by preventing toxic accumulation of free D-ribulose formed by non-specific phosphatase activities. Alternatively, may play a role in regulating D-ribulose 5-phosphate recycling in the pentose phosphate pathway. Can phosphorylate ribitol with low efficiency. The protein is FGGY carbohydrate kinase domain-containing protein of Homo sapiens (Human).